The chain runs to 330 residues: MTDRQTDRQTDRQTDRQTDRQTDRQTDRQTDGRTVSQTMNIIFSSDHYYAPYLAVSIFSIIKNTPKKINFYILDMKINQENKTIINNLASAYSCKVFFLPVCESDFQNFPKTIDYISLATYARLNLTKYIKNIEKAIYIDVDTLTNSSLQELWNIDITNYYLAACRDTFIDVKNEAYKKTIGLEGYSYFNAGILLINLNKWKEENIFQKSINWMNKYNNVMKYQDQDILNGICKGKVKFINNRFNFTPTDRDLIKKKNLLCVKMPIVISHYCGPNKFWHKKCSHLNCHIGNLLLKEMDKIIDIPSSWYDHFEKIPFLIKIKRLRKRIKDN.

Over residues Met-1–Asp-31 the composition is skewed to basic and acidic residues. The disordered stretch occupies residues Met-1–Gly-32. Residues Ser-44 to Tyr-49 and Asp-140 to Val-141 each bind UDP. Residues Asp-140, Asp-142, and His-270 each contribute to the Mn(2+) site. UDP is bound at residue His-270–Lys-276.

The protein belongs to the glycosyltransferase 8 family.

In Haemophilus influenzae (strain ATCC 51907 / DSM 11121 / KW20 / Rd), this protein is Putative glycosyltransferase HI_0258.